Reading from the N-terminus, the 159-residue chain is Dihydrofolate reductase (159 aa).

The DHFR domain maps to threonine 2 to arginine 157. Leucine 6–alanine 8 is a substrate binding site. Residues valine 7–alanine 8 and isoleucine 15–glutamine 20 each bind NADP(+). Aspartate 28 lines the substrate pocket. Glycine 44–threonine 47 serves as a coordination point for NADP(+). Arginine 58 lines the substrate pocket. NADP(+)-binding positions include leucine 63–aspartate 66 and phenylalanine 93–leucine 98. Threonine 112 is a binding site for substrate.

It belongs to the dihydrofolate reductase family.

The enzyme catalyses (6S)-5,6,7,8-tetrahydrofolate + NADP(+) = 7,8-dihydrofolate + NADPH + H(+). The protein operates within cofactor biosynthesis; tetrahydrofolate biosynthesis; 5,6,7,8-tetrahydrofolate from 7,8-dihydrofolate: step 1/1. Key enzyme in folate metabolism. Catalyzes an essential reaction for de novo glycine and purine synthesis, and for DNA precursor synthesis. The chain is Dihydrofolate reductase (folA) from Staphylococcus aureus (strain COL).